Here is a 207-residue protein sequence, read N- to C-terminus: Outer-membrane lipoprotein LolB (207 aa).

Positions 1–21 (MPMRKRHFYRLLPLASLLLAA) are cleaved as a signal peptide. C22 is lipidated: N-palmitoyl cysteine. C22 carries the S-diacylglycerol cysteine lipid modification.

The protein belongs to the LolB family. In terms of assembly, monomer.

Its subcellular location is the cell outer membrane. Functionally, plays a critical role in the incorporation of lipoproteins in the outer membrane after they are released by the LolA protein. The polypeptide is Outer-membrane lipoprotein LolB (Yersinia pestis bv. Antiqua (strain Antiqua)).